The primary structure comprises 428 residues: Divergent protein kinase domain 1A (428 aa).

Residues 1-27 lie on the Cytoplasmic side of the membrane; sequence MARSLCAGAWLRKPHYLQARLSYMRVK. Residues 28 to 48 form a helical membrane-spanning segment; the sequence is YLFFSWLVVFVGSWIIYVQYS. At 49-428 the chain is on the lumenal side; sequence TYTELCRGKD…WKKISYTNDS (380 aa).

The protein belongs to the DIPK family. In terms of processing, among the many cysteines in the lumenal domain, most are probably involved in disulfide bonds. Ubiquitous.

Its subcellular location is the endoplasmic reticulum membrane. This chain is Divergent protein kinase domain 1A (Dipk1a), found in Mus musculus (Mouse).